The primary structure comprises 193 residues: Small ribosomal subunit protein eS1 (193 aa).

It belongs to the eukaryotic ribosomal protein eS1 family.

This chain is Small ribosomal subunit protein eS1, found in Methanobrevibacter smithii (strain ATCC 35061 / DSM 861 / OCM 144 / PS).